The sequence spans 205 residues: Heat shock protein beta-1 (205 aa).

Arg-12 is subject to Omega-N-methylarginine. Ser-15 is modified (phosphoserine; by MAPKAPK2 and MAPKAPK3). Residues Ser-26 and Ser-65 each carry the phosphoserine modification. An interaction with TGFB1I1 region spans residues 70–205; the sequence is APAYSRALSR…AAKSDETAAK (136 aa). One can recognise a sHSP domain in the interval 76 to 184; sequence ALSRQLSSGV…QSNEITIPVT (109 aa). A phosphoserine; by MAPKAPK2, MAPKAPK3 and MAPKAPK5 mark is found at Ser-78 and Ser-82. 3 positions are modified to phosphoserine: Ser-83, Ser-86, and Ser-98. N6-acetyllysine is present on Lys-123. Residue Thr-174 is modified to Phosphothreonine. Phosphoserine is present on residues Ser-176 and Ser-199.

It belongs to the small heat shock protein (HSP20) family. Homooligomer. Homodimer; becomes monomeric upon activation. Heterooligomer; with HSPB6. Associates with alpha- and beta-tubulin. Interacts with TGFB1I1. Interacts with CRYAB. Interacts with HSPB8. Interacts with HSPBAP1. Post-translationally, phosphorylated upon exposure to protein kinase C activators and heat shock. Phosphorylation by MAPKAPK2 and MAPKAPK3 in response to stress dissociates HSPB1 from large small heat-shock protein (sHsps) oligomers and impairs its chaperone activity and ability to protect against oxidative stress effectively. Phosphorylation by MAPKAPK5 in response to PKA stimulation induces F-actin rearrangement. In terms of tissue distribution, detected in all tissues tested: skeletal muscle, heart, aorta, large intestine, small intestine, stomach, esophagus, bladder, adrenal gland, thyroid, pancreas, testis, adipose tissue, kidney, liver, spleen, cerebral cortex, blood serum and cerebrospinal fluid. Highest levels are found in the heart and in tissues composed of striated and smooth muscle.

It localises to the cytoplasm. The protein resides in the nucleus. It is found in the cytoskeleton. Its subcellular location is the spindle. Functionally, small heat shock protein which functions as a molecular chaperone probably maintaining denatured proteins in a folding-competent state. Plays a role in stress resistance and actin organization. Through its molecular chaperone activity may regulate numerous biological processes including the phosphorylation and the axonal transport of neurofilament proteins. This Homo sapiens (Human) protein is Heat shock protein beta-1 (HSPB1).